The primary structure comprises 527 residues: DNA polymerase epsilon subunit 2 (527 aa).

Belongs to the DNA polymerase epsilon subunit B family. In terms of assembly, component of the DNA polymerase epsilon complex consisting of four subunits: the catalytic subunit POLE and the accessory subunits POLE2, POLE3 and POLE4.

The protein resides in the nucleus. Its function is as follows. Accessory component of the DNA polymerase epsilon complex. Participates in DNA repair and in chromosomal DNA replication. The protein is DNA polymerase epsilon subunit 2 (Pole2) of Mus musculus (Mouse).